Consider the following 49-residue polypeptide: DNA-directed RNA polymerase subunit Rpo12 (49 aa).

Zn(2+)-binding residues include C11, C27, and C30.

This sequence belongs to the archaeal Rpo12/eukaryotic RPC10 RNA polymerase subunit family. As to quaternary structure, part of the RNA polymerase complex. Requires Zn(2+) as cofactor.

Its subcellular location is the cytoplasm. It carries out the reaction RNA(n) + a ribonucleoside 5'-triphosphate = RNA(n+1) + diphosphate. In terms of biological role, DNA-dependent RNA polymerase (RNAP) catalyzes the transcription of DNA into RNA using the four ribonucleoside triphosphates as substrates. This Thermococcus onnurineus (strain NA1) protein is DNA-directed RNA polymerase subunit Rpo12.